The sequence spans 428 residues: 3-phosphoshikimate 1-carboxyvinyltransferase (428 aa).

Positions 22, 23, and 27 each coordinate 3-phosphoshikimate. Phosphoenolpyruvate is bound at residue K22. Residues G96 and R124 each coordinate phosphoenolpyruvate. 3-phosphoshikimate-binding residues include S170, S171, Q172, S198, D314, N337, and K341. Q172 serves as a coordination point for phosphoenolpyruvate. The Proton acceptor role is filled by D314. Phosphoenolpyruvate contacts are provided by R345, R387, and K412.

Belongs to the EPSP synthase family. In terms of assembly, monomer.

Its subcellular location is the cytoplasm. It carries out the reaction 3-phosphoshikimate + phosphoenolpyruvate = 5-O-(1-carboxyvinyl)-3-phosphoshikimate + phosphate. It functions in the pathway metabolic intermediate biosynthesis; chorismate biosynthesis; chorismate from D-erythrose 4-phosphate and phosphoenolpyruvate: step 6/7. Catalyzes the transfer of the enolpyruvyl moiety of phosphoenolpyruvate (PEP) to the 5-hydroxyl of shikimate-3-phosphate (S3P) to produce enolpyruvyl shikimate-3-phosphate and inorganic phosphate. This Shewanella denitrificans (strain OS217 / ATCC BAA-1090 / DSM 15013) protein is 3-phosphoshikimate 1-carboxyvinyltransferase.